Consider the following 150-residue polypeptide: Ribonuclease K6 (150 aa).

A signal peptide spans 1–23; the sequence is MVLCFPLLLLLLVLWGQVCPLHA. The Proton acceptor role is filled by His38. Intrachain disulfides connect Cys46–Cys104, Cys60–Cys114, Cys78–Cys129, and Cys85–Cys92. Residue Asn55 is glycosylated (N-linked (GlcNAc...) asparagine). Substrate contacts are provided by residues 61–65 and Lys86; that span reads KPQNT. Residue Asn100 is glycosylated (N-linked (GlcNAc...) asparagine). Arg105 contributes to the substrate binding site. The active-site Proton donor is His145.

It belongs to the pancreatic ribonuclease family. Interacts (via N-terminus) with bacterial lipopolysaccharide (LPS).

Its subcellular location is the secreted. It is found in the lysosome. The protein resides in the cytoplasmic granule. Its function is as follows. Ribonuclease which shows a preference for the pyrimidines uridine and cytosine. Has potent antibacterial activity against a range of Gram-positive and Gram-negative bacteria, including P.aeruginosa, A.baumanii, M.luteus, S.aureus, E.faecalis, E.faecium, S.saprophyticus and E.coli. Causes loss of bacterial membrane integrity, and also promotes agglutination of Gram-negative bacteria. Probably contributes to urinary tract sterility. Bactericidal activity is independent of RNase activity. The sequence is that of Ribonuclease K6 (RNASE6) from Saimiri sciureus (Common squirrel monkey).